Reading from the N-terminus, the 316-residue chain is Ribosomal RNA small subunit methyltransferase H (316 aa).

Residues Ser-35–His-37, Asp-55, Phe-84, Asp-105, and Gln-112 contribute to the S-adenosyl-L-methionine site.

This sequence belongs to the methyltransferase superfamily. RsmH family.

It is found in the cytoplasm. It carries out the reaction cytidine(1402) in 16S rRNA + S-adenosyl-L-methionine = N(4)-methylcytidine(1402) in 16S rRNA + S-adenosyl-L-homocysteine + H(+). Functionally, specifically methylates the N4 position of cytidine in position 1402 (C1402) of 16S rRNA. This chain is Ribosomal RNA small subunit methyltransferase H, found in Streptococcus pyogenes serotype M6 (strain ATCC BAA-946 / MGAS10394).